Here is a 363-residue protein sequence, read N- to C-terminus: MAGNSIGQLFRVTTCGESHGVGLMAIVDGVPPGLALTEEDLQKDLDRRKPGTSKFATQRKEPDQVEIISGVFEGKTTGTPIGLLIRNTDQKSKDYGNIAQTFRPGHADYTYTQKYGFRDYRGGGRSSARETAMRVAAGAIAKKYLAEKFGILIRGHVTQIGNEVAEKLDWNEVPNNPFFCGDVDAVPRFEALVKSLREQGTSCGAKLEILAEKVPVGWGEPVFDRLDADIAHAMMSINAVKGVEIGDGFAVAGQFGHETRDELTSHGFLANHAGGILGGISSGQTIRVAIALKPTASITTPGKTINLNREDTDVLTKGRHDPCVGVRATPIAEAMLAIVLMDHFLRHRAQNADVVPPFVPIEP.

Arg48 contributes to the NADP(+) binding site. Residues 125-127 (RSS), 238-239 (NA), Gly278, 293-297 (KPTAS), and Arg319 contribute to the FMN site.

This sequence belongs to the chorismate synthase family. In terms of assembly, homotetramer. FMNH2 serves as cofactor.

It carries out the reaction 5-O-(1-carboxyvinyl)-3-phosphoshikimate = chorismate + phosphate. It participates in metabolic intermediate biosynthesis; chorismate biosynthesis; chorismate from D-erythrose 4-phosphate and phosphoenolpyruvate: step 7/7. Its function is as follows. Catalyzes the anti-1,4-elimination of the C-3 phosphate and the C-6 proR hydrogen from 5-enolpyruvylshikimate-3-phosphate (EPSP) to yield chorismate, which is the branch point compound that serves as the starting substrate for the three terminal pathways of aromatic amino acid biosynthesis. This reaction introduces a second double bond into the aromatic ring system. The chain is Chorismate synthase from Acinetobacter baumannii (strain SDF).